The primary structure comprises 142 residues: Alpha-lactalbumin (142 aa).

The N-terminal stretch at 1 to 19 (MMSFVSLLLVGILFHATQA) is a signal peptide. The 123-residue stretch at 20–142 (EQLTKCEVFQ…KLDQWLCEKL (123 aa)) folds into the C-type lysozyme domain. 4 disulfides stabilise this stretch: C25–C139, C47–C130, C80–C96, and C92–C110. 2 N-linked (GlcNAc...) asparagine glycosylation sites follow: N64 and N93. Ca(2+) contacts are provided by K98, D101, D103, D106, and D107.

It belongs to the glycosyl hydrolase 22 family. In terms of assembly, lactose synthase (LS) is a heterodimer of a catalytic component, beta1,4-galactosyltransferase (beta4Gal-T1) and a regulatory component, alpha-lactalbumin (LA). In terms of tissue distribution, mammary gland specific. Secreted in milk.

It is found in the secreted. Its function is as follows. Regulatory subunit of lactose synthase, changes the substrate specificity of galactosyltransferase in the mammary gland making glucose a good acceptor substrate for this enzyme. This enables LS to synthesize lactose, the major carbohydrate component of milk. In other tissues, galactosyltransferase transfers galactose onto the N-acetylglucosamine of the oligosaccharide chains in glycoproteins. This Ovis aries (Sheep) protein is Alpha-lactalbumin (LALBA).